Reading from the N-terminus, the 246-residue chain is E3 ubiquitin-protein ligase RNF182 (246 aa).

The segment at 22–70 (CKICYNRYNLRQRKPKVLGCCHRVCAKCLYKLVDCGESPQCVIVCPFCR) adopts an RING-type zinc-finger fold. A run of 2 helical transmembrane segments spans residues 184–204 (VFVW…IYLL) and 211–231 (LGVV…IYGF).

Interacts with ATP6V0C.

It is found in the membrane. Its subcellular location is the cytoplasm. It catalyses the reaction S-ubiquitinyl-[E2 ubiquitin-conjugating enzyme]-L-cysteine + [acceptor protein]-L-lysine = [E2 ubiquitin-conjugating enzyme]-L-cysteine + N(6)-ubiquitinyl-[acceptor protein]-L-lysine.. It participates in protein modification; protein ubiquitination. In terms of biological role, E3 ubiquitin-protein ligase that mediates the ubiquitination of atp6v0c and targets it to degradation via the ubiquitin-proteasome pathway. The polypeptide is E3 ubiquitin-protein ligase RNF182 (rnf182) (Xenopus laevis (African clawed frog)).